A 963-amino-acid polypeptide reads, in one-letter code: Protein suppressor of white apricot (963 aa).

An SURP motif 1 repeat occupies 234–276 (IIEKTARFIATQGAQMEILIKAKQANNTQFDFLTQGGHLQPYY). 2 disordered regions span residues 290–322 (PAPQTPLDQQNTDKEAPSADDHSEEVAGGRRNP) and 360–430 (EDES…EPPQ). The segment covering 300-317 (NTDKEAPSADDHSEEVAG) has biased composition (basic and acidic residues). Over residues 364–375 (SNPGNSQHSGGT) the composition is skewed to polar residues. The span at 407–418 (THEEESSNREQQ) shows a compositional bias: basic and acidic residues. A phosphoserine mark is found at Ser438, Ser447, Ser448, and Ser450. The segment at 445-470 (NYSSESEEEEDQVQPEKEEEKKPEPV) is disordered. The segment covering 458-468 (QPEKEEEKKPE) has biased composition (basic and acidic residues). The stretch at 483–523 (IIDKTATYVIKNGRQFEETLRTKSVDRFSFLLPANEYYPYY) is one SURP motif 2 repeat. Disordered stretches follow at residues 593-613 (PQEASDEETSSNAAGVEHVRP), 634-662 (TAGQKGNITASPSCSSPQKEQRQAEERVK), and 716-963 (PPES…SSSP). The span at 637 to 651 (QKGNITASPSCSSPQ) shows a compositional bias: polar residues. Ser649 is modified (phosphoserine). The span at 652-662 (KEQRQAEERVK) shows a compositional bias: basic and acidic residues. Residues 718-727 (ESAAGAATAD) are compositionally biased toward low complexity. Acidic residues predominate over residues 768-778 (DEEDDDEEDGG). A compositionally biased stretch (polar residues) spans 787–796 (NDDSTNTFTS). The span at 799-809 (VLPPTAAPPPA) shows a compositional bias: pro residues. Over residues 820–830 (QLVATTSTRSS) the composition is skewed to low complexity. Residues 831-847 (SSRHLKTHRRSRSRSKN) are compositionally biased toward basic residues. Low complexity predominate over residues 848-858 (VRSSDSSPSSR). 2 stretches are compositionally biased toward basic residues: residues 861-870 (SRRRRQKSSR) and 882-913 (KSQHSSTQRKKTPKKRRRSKSRSRSKSIRRSR). Residues Ser912, Ser914, and Ser916 each carry the phosphoserine modification. Residues 934 to 944 (AEQRRQQDRRR) are compositionally biased toward basic and acidic residues. Residues 945–963 (TPTKKSHKRHKRRRRSSSP) show a composition bias toward basic residues.

Its subcellular location is the nucleus speckle. Its function is as follows. Regulator of pre-mRNA splicing (and, possibly, of other RNA processing events). Regulates its own expression at the level of RNA processing. In Drosophila melanogaster (Fruit fly), this protein is Protein suppressor of white apricot (su(w[a])).